Here is a 355-residue protein sequence, read N- to C-terminus: MSFDVLTINPGSTSTKLAVYQGDKVLFEETVRHTMQELADFNNVQEQFDFRWQVLRRVMDAHGYDVKKLQAVVGRGGLLRPVAGGTYMVTEKMIDDLKENKYGEHASNLGAMLAKKLADELTIPSFIVDPVVVDEMQEIARISGNAFVTRKSIFHALNHKAAGRKIAKELGKDYEKMNFVIAHLGGGISVAAHRQGKAVDVNNALDGDGPFSPERSGSLPMNDFLEACFSGKWTKRELHELIVGRGGMISYLGTNSMLEVEAKVQAGEEKAIEAFDAMAYQVSKEIGACSVVLQGKVDAIILTGGLARSELFTSKIIEQTNWITSVIIEPGEDELEALNSGVQRVLAGLEKEKEY.

Belongs to the acetokinase family.

The protein resides in the cytoplasm. It catalyses the reaction butanoate + ATP = butanoyl phosphate + ADP. The sequence is that of Probable butyrate kinase from Listeria monocytogenes serovar 1/2a (strain ATCC BAA-679 / EGD-e).